A 76-amino-acid polypeptide reads, in one-letter code: Bomanin Tailed 2 (76 aa).

A signal peptide spans 1-22 (MKALQVAGTLMLLFCLLAAVNA). Positions 23-24 (TP) are cleaved as a propeptide — removed by a dipeptidylpeptidase. C33 and C36 are joined by a disulfide.

It belongs to the bomanin family.

The protein localises to the secreted. In terms of biological role, secreted immune-induced peptide induced by Toll signaling. Has a role in resistance to bacterial and fungal infections. The strength of antimicrobial activity appears to correlate with the overall level of expression. In Drosophila melanogaster (Fruit fly), this protein is Bomanin Tailed 2.